The sequence spans 648 residues: Macrolide export ATP-binding/permease protein MacB (648 aa).

An ABC transporter domain is found at 6-251 (IRVRGVSRAF…GPSAGWRGAI (246 aa)). Residue 42 to 49 (GASGSGKS) coordinates ATP. The next 4 helical transmembrane spans lie at 273 to 293 (LLTM…SALG), 528 to 548 (VAVI…LVSV), 572 to 592 (FLIE…MLAL), and 613 to 633 (SIIV…FLPA).

The protein belongs to the ABC transporter superfamily. Macrolide exporter (TC 3.A.1.122) family. As to quaternary structure, homodimer.

It localises to the cell inner membrane. Functionally, non-canonical ABC transporter that contains transmembrane domains (TMD), which form a pore in the inner membrane, and an ATP-binding domain (NBD), which is responsible for energy generation. Confers resistance against macrolides. The chain is Macrolide export ATP-binding/permease protein MacB from Agrobacterium fabrum (strain C58 / ATCC 33970) (Agrobacterium tumefaciens (strain C58)).